The primary structure comprises 428 residues: Divalent metal cation transporter MntH (428 aa).

11 helical membrane passes run 33-53, 60-80, 114-134, 136-156, 171-191, 210-230, 258-278, 299-319, 334-356, 365-385, and 406-426; these read WYLL…GNVA, AQFG…AALV, QAEI…AIAL, IMFN…SLLL, VITA…FVVT, SVLL…VYLH, VGLA…VAAL, TLGA…GLAS, LLHW…LAIL, TLVL…LPLV, and VGWV…YLTV.

Belongs to the NRAMP family.

It is found in the cell membrane. Its function is as follows. H(+)-stimulated, divalent metal cation uptake system. Transports zinc and iron. Can also interact with manganese and copper. In Mycobacterium tuberculosis (strain CDC 1551 / Oshkosh), this protein is Divalent metal cation transporter MntH.